A 1390-amino-acid polypeptide reads, in one-letter code: DNA-directed RNA polymerase subunit beta (1390 aa).

It belongs to the RNA polymerase beta chain family. In terms of assembly, the RNAP catalytic core consists of 2 alpha, 1 beta, 1 beta' and 1 omega subunit. When a sigma factor is associated with the core the holoenzyme is formed, which can initiate transcription.

The catalysed reaction is RNA(n) + a ribonucleoside 5'-triphosphate = RNA(n+1) + diphosphate. DNA-dependent RNA polymerase catalyzes the transcription of DNA into RNA using the four ribonucleoside triphosphates as substrates. The chain is DNA-directed RNA polymerase subunit beta from Methylobacillus flagellatus (strain ATCC 51484 / DSM 6875 / VKM B-1610 / KT).